The chain runs to 688 residues: Glycine--tRNA ligase beta subunit (688 aa).

Belongs to the class-II aminoacyl-tRNA synthetase family. In terms of assembly, tetramer of two alpha and two beta subunits.

It is found in the cytoplasm. It carries out the reaction tRNA(Gly) + glycine + ATP = glycyl-tRNA(Gly) + AMP + diphosphate. The sequence is that of Glycine--tRNA ligase beta subunit from Syntrophotalea carbinolica (strain DSM 2380 / NBRC 103641 / GraBd1) (Pelobacter carbinolicus).